The primary structure comprises 273 residues: Putative phosphoenolpyruvate synthase regulatory protein (273 aa).

153 to 160 (AVSRAGKT) contributes to the ADP binding site.

Belongs to the pyruvate, phosphate/water dikinase regulatory protein family. PSRP subfamily.

The catalysed reaction is [pyruvate, water dikinase] + ADP = [pyruvate, water dikinase]-phosphate + AMP + H(+). The enzyme catalyses [pyruvate, water dikinase]-phosphate + phosphate + H(+) = [pyruvate, water dikinase] + diphosphate. In terms of biological role, bifunctional serine/threonine kinase and phosphorylase involved in the regulation of the phosphoenolpyruvate synthase (PEPS) by catalyzing its phosphorylation/dephosphorylation. The chain is Putative phosphoenolpyruvate synthase regulatory protein from Xylella fastidiosa (strain M12).